The following is a 214-amino-acid chain: Octanoyltransferase (214 aa).

One can recognise a BPL/LPL catalytic domain in the interval 36–214; sequence GRESEMVWLL…QQKFDTIFLQ (179 aa). Substrate is bound by residues 75-82, 147-149, and 160-162; these read RGGKYSYH, AFG, and GFS. Cys178 serves as the catalytic Acyl-thioester intermediate.

This sequence belongs to the LipB family.

It is found in the cytoplasm. The catalysed reaction is octanoyl-[ACP] + L-lysyl-[protein] = N(6)-octanoyl-L-lysyl-[protein] + holo-[ACP] + H(+). Its pathway is protein modification; protein lipoylation via endogenous pathway; protein N(6)-(lipoyl)lysine from octanoyl-[acyl-carrier-protein]: step 1/2. Functionally, catalyzes the transfer of endogenously produced octanoic acid from octanoyl-acyl-carrier-protein onto the lipoyl domains of lipoate-dependent enzymes. Lipoyl-ACP can also act as a substrate although octanoyl-ACP is likely to be the physiological substrate. In Anaplasma marginale (strain Florida), this protein is Octanoyltransferase.